Consider the following 443-residue polypeptide: Protein PRRC1 (443 aa).

The tract at residues methionine 1–leucine 165 is disordered. Positions glutamate 29–glycine 45 are enriched in polar residues. Positions proline 59–phenylalanine 72 are enriched in pro residues. Low complexity-rich tracts occupy residues valine 81–proline 96 and proline 109–glycine 134. Serine 406 carries the post-translational modification Phosphoserine.

This sequence belongs to the PRRC1 family. Interacts with PRKAR1A; resulting in PKA activation.

It is found in the golgi apparatus. The protein localises to the cytoplasm. May act as a regulator of the protein kinase A (PKA) during embryonic development. The polypeptide is Protein PRRC1 (Prrc1) (Mus musculus (Mouse)).